The sequence spans 203 residues: Small ribosomal subunit protein uS4 (203 aa).

In terms of domain architecture, S4 RNA-binding spans 93 to 156; sequence QRLDNVVYRL…MKVPAILEAV (64 aa).

It belongs to the universal ribosomal protein uS4 family. As to quaternary structure, part of the 30S ribosomal subunit. Contacts protein S5. The interaction surface between S4 and S5 is involved in control of translational fidelity.

Its function is as follows. One of the primary rRNA binding proteins, it binds directly to 16S rRNA where it nucleates assembly of the body of the 30S subunit. In terms of biological role, with S5 and S12 plays an important role in translational accuracy. The protein is Small ribosomal subunit protein uS4 of Lactococcus lactis subsp. cremoris (strain MG1363).